We begin with the raw amino-acid sequence, 182 residues long: Lipoprotein signal peptidase (182 aa).

3 helical membrane-spanning segments follow: residues 12–32 (VAVFACVAAAALIVDQLTKAW), 68–88 (ATWVISLLAVVACVALAVAGV), and 91–111 (ISMKWSVALSFAFAGALGNLI). Catalysis depends on residues Asp127 and Asp140. A helical transmembrane segment spans residues 135–155 (VGNVADIYLVVAGVVLVILIL).

This sequence belongs to the peptidase A8 family.

It localises to the cell membrane. It catalyses the reaction Release of signal peptides from bacterial membrane prolipoproteins. Hydrolyzes -Xaa-Yaa-Zaa-|-(S,diacylglyceryl)Cys-, in which Xaa is hydrophobic (preferably Leu), and Yaa (Ala or Ser) and Zaa (Gly or Ala) have small, neutral side chains.. It functions in the pathway protein modification; lipoprotein biosynthesis (signal peptide cleavage). This protein specifically catalyzes the removal of signal peptides from prolipoproteins. This Bifidobacterium longum subsp. infantis (strain ATCC 15697 / DSM 20088 / JCM 1222 / NCTC 11817 / S12) protein is Lipoprotein signal peptidase.